A 335-amino-acid chain; its full sequence is MQKAIIIGASGYTGAELARLLIKHPEFELTGLYVSRQSQDANKCISDIYPQLKHLVDLPLQPLPEQLTQLAQQADLVFLATAHEVSHDLAPIFLQNQCKVFDLSGAFRVNNAAFYRTFYGFEHQHPELLTQAVYGLAEWNAHQIKQTDLVAVAGCYPTVSQLSLKPLIAHNLLDLTQLPVINAVSGVSGAGRKATLTSSFCEVSLNAYGVFNHRHQPEIATHLGTEVIFTPHLGNFKRGILATITAKLKTGVSDEQIRVAYQHAYADKPLVRVYEQGLPSIKAVEFTPYCDIGFVTKNGHIIIIGAEDNLLKGAAAQAVQCANIRYGLTETLGLL.

C155 is a catalytic residue.

This sequence belongs to the NAGSA dehydrogenase family. Type 1 subfamily.

The protein localises to the cytoplasm. It carries out the reaction N-acetyl-L-glutamate 5-semialdehyde + phosphate + NADP(+) = N-acetyl-L-glutamyl 5-phosphate + NADPH + H(+). Its pathway is amino-acid biosynthesis; L-arginine biosynthesis; N(2)-acetyl-L-ornithine from L-glutamate: step 3/4. Catalyzes the NADPH-dependent reduction of N-acetyl-5-glutamyl phosphate to yield N-acetyl-L-glutamate 5-semialdehyde. The chain is N-acetyl-gamma-glutamyl-phosphate reductase from Pasteurella multocida (strain Pm70).